The primary structure comprises 425 residues: Actin-related protein 3 (425 aa).

This sequence belongs to the actin family. ARP3 subfamily. In terms of assembly, component of the Arp2/3 complex, at least composed of arx-1, arx-2, arx-4 and arx-6.

Its subcellular location is the cytoplasm. It localises to the cytoskeleton. Functions as ATP-binding component of the Arp2/3 complex which is involved in regulation of actin polymerization and together with an activating nucleation-promoting factor (NPF) mediates the formation of branched actin networks. Seems to contact the pointed end of the daughter actin filament. Plays a role in time-dependent memory loss and the retention of conditioned behavior over time. This is Actin-related protein 3 from Caenorhabditis elegans.